Consider the following 517-residue polypeptide: Cytochrome P450 monooxygenase bsc11 (517 aa).

Residues 16-33 form a helical membrane-spanning segment; sequence ALPLTCTGLIIIFAFYLS. Asn-204 is a glycosylation site (N-linked (GlcNAc...) asparagine). Cys-448 serves as a coordination point for heme.

It belongs to the cytochrome P450 family. Heme is required as a cofactor.

The protein localises to the membrane. Its pathway is mycotoxin biosynthesis. Its function is as follows. Cytochrome P450 monooxygenase; part of the gene cluster that mediates the biosynthesis of the diterpene glucoside brassicicene C. In the first step of the brassicicene C biosynthesis, the bifunctional diterpene synthase bsc8 that possesses both prenyl transferase and terpene cyclase activity, converts isopentenyl diphosphate and dimethylallyl diphosphate into geranylgeranyl diphosphate (GGDP) that is further converted into fusicocca-2,10(14)-diene, the first precursor for brassicicene C. Fusicocca-2,10(14)-diene is then substrate of cytochrome P450 monooxygenase bsc1 for hydroxylation at the C-8 position. Oxidation at C-16 position to aldehyde is then catalyzed by the cytochrome P450 monooyxygenase bsc7, yielding fusicocca-2,10(14)-diene-8-beta,16-diol. Follows the isomerization of the double bond and reduction of aldehyde to alcohol catalyzed by the short-chain dehydrogenase/reductase bsc3 to yield the diol compound fusicocca-1,10(14)-diene-8 beta,16-diol. The next step is the oxidation at the C-3 position of fusicocca-2,10(14)-diene-8-beta,16-diol catalyzed by the alpha-ketoglutarate dependent dioxygenase bsc9, to produce a triol compound. Methylation of the hydroxy group at position 16 is performed by the methyltransferase bsc6. 16-O-methylation is followed by oxidation at the C-13 position to ketone and an alkyl shift of the methyl group leads to brassicicene C. Although the probable acetyltransferase bsc4 is included in the gene cluster, no acetylation reactions are necessary for brassicicene C biosynthesis. However, the fact that brassicicene E, which is a structurally related compound having an acetoxy group at position 12, was previously isolated from another strain of A.brassicicola suggests that the ATCC 96836 strain might also produce a small amount of brassicicene E. This is Cytochrome P450 monooxygenase bsc11 from Alternaria brassicicola (Dark leaf spot agent).